Consider the following 1331-residue polypeptide: Retrotransposon-like protein 1 (1331 aa).

Disordered regions lie at residues 1 to 123, 128 to 147, 556 to 595, and 971 to 1033; these read MMEP…SQED, TDLA…SSTV, EADE…ETFY, and PSSE…DEPN. The segment covering 19-30 has biased composition (low complexity); the sequence is SSKQMESSEGSS. Acidic residues-rich tracts occupy residues 109-123, 128-143, and 569-578; these read EMEE…SQED, TDLA…EEPD, and GSDDLSESEP. Residues 992–1001 are compositionally biased toward low complexity; it reads RRVATTTRPT. Positions 1015-1024 are enriched in acidic residues; that stretch reads PESEDEEESE. A run of 2 helical transmembrane segments spans residues 1070-1090 and 1117-1137; these read FYRS…LVML and LFLD…TQLF. A disordered region spans residues 1309 to 1331; that stretch reads SPPREGATLEELPSDADEDAGLD. Acidic residues predominate over residues 1320–1331; that stretch reads LPSDADEDAGLD.

It localises to the membrane. Plays an essential role in capillaries endothelial cells for the maintenance of feto-maternal interface and for development of the placenta. The sequence is that of Retrotransposon-like protein 1 (RTL1) from Bos taurus (Bovine).